A 192-amino-acid chain; its full sequence is Probable apo-citrate lyase phosphoribosyl-dephospho-CoA transferase (192 aa).

This sequence belongs to the CitX family.

The catalysed reaction is apo-[citrate lyase ACP] + 2'-(5''-triphospho-alpha-D-ribosyl)-3'-dephospho-CoA = holo-[citrate lyase ACP] + diphosphate. In terms of biological role, transfers 2-(5''-triphosphoribosyl)-3'-dephosphocoenzyme-A on a serine residue to the apo-acyl carrier protein (gamma chain) of the citrate lyase to yield holo-acyl carrier protein. The polypeptide is Probable apo-citrate lyase phosphoribosyl-dephospho-CoA transferase (Streptococcus pyogenes serotype M18 (strain MGAS8232)).